The following is a 749-amino-acid chain: Amyloid-beta A4 precursor protein-binding family A member 2 (749 aa).

Disordered stretches follow at residues Met-1 to Glu-94, Asp-130 to Glu-220, and Ser-238 to Glu-344. At Ser-11 the chain carries Phosphoserine. Residues Gly-70–Thr-80 show a composition bias toward polar residues. Composition is skewed to acidic residues over residues Ser-81–Glu-94 and Thr-131–Thr-142. The segment at His-185–Ala-270 is STXBP1-binding. Ser-208 is subject to Phosphoserine. Positions Ser-238–Glu-247 are enriched in polar residues. Residues Arg-305–His-315 are compositionally biased toward basic and acidic residues. The 188-residue stretch at Asp-368–Asp-555 folds into the PID domain. 2 PDZ domains span residues Glu-568 to Cys-654 and Thr-659 to Ala-734.

In terms of assembly, part of a multimeric complex containing STXBP1 and syntaxin-1. Binds to the cytoplasmic domain of amyloid-beta protein, and to the nuclear factor NF-kappa-B/p65 via its PDZ domain. Interacts with the N-terminal domain of NECAB3. In terms of tissue distribution, brain.

Its function is as follows. Putative function in synaptic vesicle exocytosis by binding to STXBP1, an essential component of the synaptic vesicle exocytotic machinery. May modulate processing of the amyloid-beta precursor protein (APP) and hence formation of APP-beta. The chain is Amyloid-beta A4 precursor protein-binding family A member 2 (APBA2) from Homo sapiens (Human).